Consider the following 208-residue polypeptide: Uracil phosphoribosyltransferase (208 aa).

Residues R78, R103, and 130-138 (DPMLATGGS) contribute to the 5-phospho-alpha-D-ribose 1-diphosphate site. Residues I193 and 198–200 (GDA) contribute to the uracil site. 5-phospho-alpha-D-ribose 1-diphosphate is bound at residue D199.

This sequence belongs to the UPRTase family. Requires Mg(2+) as cofactor.

It carries out the reaction UMP + diphosphate = 5-phospho-alpha-D-ribose 1-diphosphate + uracil. Its pathway is pyrimidine metabolism; UMP biosynthesis via salvage pathway; UMP from uracil: step 1/1. With respect to regulation, allosterically activated by GTP. Functionally, catalyzes the conversion of uracil and 5-phospho-alpha-D-ribose 1-diphosphate (PRPP) to UMP and diphosphate. This is Uracil phosphoribosyltransferase from Shewanella sediminis (strain HAW-EB3).